Consider the following 265-residue polypeptide: tRNA pseudouridine synthase A (265 aa).

Residue Asp58 is the Nucleophile of the active site. Substrate is bound at residue Tyr116.

This sequence belongs to the tRNA pseudouridine synthase TruA family. In terms of assembly, homodimer.

The catalysed reaction is uridine(38/39/40) in tRNA = pseudouridine(38/39/40) in tRNA. Formation of pseudouridine at positions 38, 39 and 40 in the anticodon stem and loop of transfer RNAs. This is tRNA pseudouridine synthase A from Neisseria gonorrhoeae (strain ATCC 700825 / FA 1090).